The following is a 426-amino-acid chain: Chordin-like protein 2 (426 aa).

The first 25 residues, 1 to 25 (MVPGVRIIPSLLGLVMFWLPLDSQA), serve as a signal peptide directing secretion. VWFC domains are found at residues 31–96 (KVCL…PRCV) and 109–175 (KSCQ…QTCK). A glycan (N-linked (GlcNAc...) asparagine) is linked at asparagine 114. At serine 182 the chain carries Phosphoserine. Over residues 182–191 (STEENLTQLQ) the composition is skewed to polar residues. Residues 182-216 (STEENLTQLQHGERHSQDPCSERRGPSTPAPTSLS) form a disordered region. Asparagine 186 is a glycosylation site (N-linked (GlcNAc...) asparagine). Residues 192–206 (HGERHSQDPCSERRG) are compositionally biased toward basic and acidic residues. Low complexity predominate over residues 207–216 (PSTPAPTSLS). A VWFC 3 domain is found at 246–311 (KACTHNGKTY…VAGKCCKICP (66 aa)).

Interacts with GDF5. May interact with INHBA, BMP2, BMP4, BMP5, BMP6, and BMP7. Weakly expressed in the liver and kidney. In reproductive organs expressed in connective tissues such as ligaments of the ovary and oviduct in females, and of testis, epididymis and certain male accessory sex glands in males. Expression was high in uterine myometrium. Weakly expressed in cartilage of the femoral head, patella, articular facets of vertebrae, in the annulus fibrosus of intervertebral disks. In normal cartilage, expression was confined to articular chondrocytes especially in the superficial zone.

It is found in the secreted. Functionally, implicated in tumor angiogenesis. May inhibits BMPs activity by blocking their interaction with their receptors. Has a negative regulator effect on the cartilage formation/regeneration from immature mesenchymal cells, by preventing or reducing the rate of matrix accumulation. May play a role during myoblast and osteoblast differentiation, and maturation. The polypeptide is Chordin-like protein 2 (Chrdl2) (Mus musculus (Mouse)).